Reading from the N-terminus, the 177-residue chain is Small ribosomal subunit protein uS13 (177 aa).

Over residues 132-145 (GVRHKRGQKVRGQR) the composition is skewed to basic residues. A disordered region spans residues 132-177 (GVRHKRGQKVRGQRTKSTGRTEGTIGVNVEAIKEEQAEDAAAEDDE). Acidic residues predominate over residues 167-177 (QAEDAAAEDDE).

This sequence belongs to the universal ribosomal protein uS13 family. Part of the 30S ribosomal subunit. Forms a loose heterodimer with protein S19. Forms two bridges to the 50S subunit in the 70S ribosome.

Functionally, located at the top of the head of the 30S subunit, it contacts several helices of the 16S rRNA. In the 70S ribosome it contacts the 23S rRNA (bridge B1a) and protein L5 of the 50S subunit (bridge B1b), connecting the 2 subunits; these bridges are implicated in subunit movement. This is Small ribosomal subunit protein uS13 from Haloarcula marismortui (strain ATCC 43049 / DSM 3752 / JCM 8966 / VKM B-1809) (Halobacterium marismortui).